Reading from the N-terminus, the 623-residue chain is (-)-alpha-pinene synthase 1, chloroplastic (623 aa).

A chloroplast-targeting transit peptide spans 1–52 (MDLISVLPSASKSCVCLHKPLSSSTHKLKPFCKTIRILGMPRRWKFAGPSMS). Aspartate 374, aspartate 378, and aspartate 526 together coordinate Mg(2+). The DDXXD motif signature appears at 374-378 (DDMYD).

The protein belongs to the terpene synthase family. Tpsd subfamily. Requires Mg(2+) as cofactor. The cofactor is Mn(2+).

It localises to the plastid. The protein localises to the chloroplast. It catalyses the reaction (2E)-geranyl diphosphate = (1S,5S)-alpha-pinene + diphosphate. The catalysed reaction is (2E)-geranyl diphosphate = (1S,5S)-beta-pinene + diphosphate. It carries out the reaction (2E)-geranyl diphosphate = (-)-beta-phellandrene + diphosphate. The protein operates within terpene metabolism; oleoresin biosynthesis. It functions in the pathway secondary metabolite biosynthesis; terpenoid biosynthesis. Its function is as follows. Monoterpene synthase (TPS) involved in the biosynthesis of monoterpene natural products included in conifer oleoresin secretions and volatile emissions; these compounds contribute to biotic and abiotic stress defense against herbivores and pathogens. Catalyzes the conversion of (2E)-geranyl diphosphate (GPP) to (-)-alpha-pinene and (-)-beta-pinene, and, to a lower extent, to (-)-beta-phellandrene. This is (-)-alpha-pinene synthase 1, chloroplastic from Pinus banksiana (Jack pine).